The sequence spans 1567 residues: Ice nucleation protein (1567 aa).

Positions 130-185 (PAAEPSAPATQATSATLPTPATPSTQATPSTQSTQSTQSTEATQSTEATPVATVAA) are enriched in low complexity. Disordered stretches follow at residues 130-195 (PAAE…QQHD), 270-329 (YGST…KGSD), 356-378 (AGSESSLTAGYGSTQTARKGSDV), 449-474 (TQTSGSDSSLTAGYGSTQTARKGSDI), 502-529 (SESSLTAGYGSTQTAQQDSSLTTGYGST), 594-620 (QTAGSDSSLTAGYGSTQTAREGSDVTA), 642-668 (QTSGSDSSLTAGYGSTQTARKGSDVTA), 689-716 (TQTSGSDSSLTAGYGSTQTARKGSDVTA), 738-764 (QTSGSDSSLTAGYGSTQTARKGSDVTA), 785-810 (TQTSGSDSSLTAGYGSTQTARKGSDI), 833-860 (TQTSGSDSSLTAGYGSTQTAREGSDVTA), 929-959 (TQTSGSDSSLTAGYGSTQTARKGSDMTAGYG), and 977-1004 (TQTSGSDSSLTAGYGSTQTAREGSDVTA). The span at 270 to 282 (YGSTQTAQEGSRL) shows a compositional bias: polar residues. Low complexity predominate over residues 283-296 (TSGYGSTATSGSDS). Composition is skewed to polar residues over residues 302-325 (YGSTQTAGSESSLTAGYGSTQTAR), 356-373 (AGSESSLTAGYGSTQTAR), 449-469 (TQTSGSDSSLTAGYGSTQTAR), and 502-519 (SESSLTAGYGSTQTAQQD). Over residues 520–529 (SSLTTGYGST) the composition is skewed to low complexity. Polar residues-rich tracts occupy residues 594 to 613 (QTAGSDSSLTAGYGSTQTAR), 642 to 661 (QTSGSDSSLTAGYGSTQTAR), 689 to 709 (TQTSGSDSSLTAGYGSTQTAR), 738 to 757 (QTSGSDSSLTAGYGSTQTAR), 785 to 805 (TQTSGSDSSLTAGYGSTQTAR), 833 to 853 (TQTSGSDSSLTAGYGSTQTAR), 929 to 949 (TQTSGSDSSLTAGYGSTQTAR), and 977 to 997 (TQTSGSDSSLTAGYGSTQTAR).

Belongs to the bacterial ice nucleation protein family.

It localises to the cell outer membrane. In terms of biological role, ice nucleation proteins enable bacteria to nucleate crystallization in supercooled water. In Xanthomonas campestris pv. translucens, this protein is Ice nucleation protein (inaX).